Reading from the N-terminus, the 775-residue chain is MWIQVRTMDGRDTRRIDSLSKLTKVEDLRARIQQIFGVALESQRLFYRGKQMENGHTLFDYSVGLNDIVQLLVRQIPDSVPTKDKECGISDADSGCGSGQGESDKNSSCGEGATDVDGQPAGINSENVGPSLYKKNDLVDARDLNMGAWFEAQIVSVSKRVNPDGMSAEILDTSAASDDIIYHVKYEDYPENGVVQLTYKDVRLRARTTLPWHDLKVGQVVMVNYNPDEPKERGYWYDAEILRKRETRTIKEIYVKVLLGDAGDSLNDCRIRFVDEIYKIEEPGSAYITTESPQKRQNGPECKHCKDNPKRACRMCACYVCGGKQDPEKQLLCDECDMAFHIYCLKPPLSAIPQDEDWYCPDCRNDASEVVLAGEKLKESKKKAKMASASSSSQRDWGKGMACVGRSRECTIVPSNHYGPIPGVPVGTLWKFRVQVSESGVHRPHVAGIHGRSNDGSYSLVLAGGYEDDVDNGSEFTYTGSGGRDLSGNKRTAEQSCDQKLTNMNRALALNCSAPINDKEGAVAKDWRAGKPVRVVRNTKGKKHSKYAPEDGNRYDGIYKVVKYWPEKGKSGFLVWRYLLRRDDEEPAPWSKEGKERIKKLGLVMQYPDGYLESLASKEREKENKTEDELSESPSKGKRKRNSAGSGLSDAKSTPKKTKVESYKLSLDQKTLIKQDDLNAKLWREVMSFLKEGPKFLSKVEETFLCICCQEVVYEPITTECHHNICKGCLDRSFKALVHNCPACRHDLGKNYSLNVNKPLQAILSQLFPGYERGR.

The Ubiquitin-like domain maps to 1 to 77 (MWIQVRTMDG…IVQLLVRQIP (77 aa)). The segment at 81–128 (PTKDKECGISDADSGCGSGQGESDKNSSCGEGATDVDGQPAGINSENV) is disordered. 2 tudor-like regions span residues 131 to 207 (SLYK…LRAR) and 214 to 283 (DLKV…IEEP). A linker region spans residues 293–301 (PQKRQNGPE). The PHD-type zinc-finger motif lies at 299 to 366 (GPECKHCKDN…DWYCPDCRND (68 aa)). Histone H3R2me0 binding stretches follow at residues 333–337 (CDECD) and 353–355 (PQD). The region spanning 419-582 (GPIPGVPVGT…FLVWRYLLRR (164 aa)) is the YDG domain. The interval 445–446 (HV) is required to promote base flipping. Residues 463 to 464 (AG) and Asp-469 contribute to the DNA site. Required for formation of a 5-methylcytosine-binding pocket regions lie at residues 466–469 (YEDD) and 478–481 (YTGS). Basic and acidic residues predominate over residues 616 to 628 (ASKEREKENKTED). Residues 616 to 655 (ASKEREKENKTEDELSESPSKGKRKRNSAGSGLSDAKSTP) form a disordered region. Residues 706–745 (CICCQEVVYEPITTECHHNICKGCLDRSFKALVHNCPACR) form an RING-type zinc finger.

Its subcellular location is the nucleus. It carries out the reaction S-ubiquitinyl-[E2 ubiquitin-conjugating enzyme]-L-cysteine + [acceptor protein]-L-lysine = [E2 ubiquitin-conjugating enzyme]-L-cysteine + N(6)-ubiquitinyl-[acceptor protein]-L-lysine.. It participates in protein modification; protein ubiquitination. In terms of biological role, multidomain protein that acts as a key epigenetic regulator by bridging DNA methylation and chromatin modification. Specifically recognizes and binds hemimethylated DNA at replication forks via its YDG domain and recruits dnmt1 methyltransferase to ensure faithful propagation of the DNA methylation patterns through DNA replication. In addition to its role in maintenance of DNA methylation, also plays a key role in chromatin modification: through its tudor-like regions and PHD-type zinc fingers, specifically recognizes and binds histone H3 trimethylated at 'Lys-9' (H3K9me3) and unmethylated at 'Arg-2' (H3R2me0), respectively, and recruits chromatin proteins. Enriched in pericentric heterochromatin where it recruits different chromatin modifiers required for this chromatin replication. Also localizes to euchromatic regions where it negatively regulates transcription possibly by impacting DNA methylation and histone modifications. Has E3 ubiquitin-protein ligase activity by mediating the ubiquitination of target proteins. However, it is still unclear how E3 ubiquitin-protein ligase activity is related to its role in chromatin in vivo. This chain is E3 ubiquitin-protein ligase UHRF1 (uhrf1), found in Xenopus tropicalis (Western clawed frog).